The sequence spans 642 residues: Poly(A) polymerase beta (642 aa).

Residues 101-103 (FGS), T110, 114-116 (DID), D168, K229, Y238, and 247-248 (GV) each bind ATP. D114, D116, and D168 together coordinate Mg(2+). 2 disordered regions span residues 530–553 (SENS…GNPQ) and 620–642 (LVNH…ILGV). The segment covering 620 to 636 (LVNHPSRPSGNTATNIP) has biased composition (polar residues).

This sequence belongs to the poly(A) polymerase family. Interacts with GSG1. The cofactor is Mg(2+). It depends on Mn(2+) as a cofactor. As to expression, testis specific.

The protein localises to the cytoplasm. Its subcellular location is the nucleus. The enzyme catalyses RNA(n) + ATP = RNA(n)-3'-adenine ribonucleotide + diphosphate. The protein is Poly(A) polymerase beta of Mus musculus (Mouse).